Here is a 145-residue protein sequence, read N- to C-terminus: Small ribosomal subunit protein eS12A (145 aa).

Belongs to the eukaryotic ribosomal protein eS12 family. Component of the small ribosomal subunit (SSU). Mature yeast ribosomes consist of a small (40S) and a large (60S) subunit. The 40S small subunit contains 1 molecule of ribosomal RNA (18S rRNA) and at least 33 different proteins. The large 60S subunit contains 3 rRNA molecules (25S, 5.8S and 5S rRNA) and at least 46 different proteins.

The protein resides in the cytoplasm. Its function is as follows. Component of the ribosome, a large ribonucleoprotein complex responsible for the synthesis of proteins in the cell. The small ribosomal subunit (SSU) binds messenger RNAs (mRNAs) and translates the encoded message by selecting cognate aminoacyl-transfer RNA (tRNA) molecules. The large subunit (LSU) contains the ribosomal catalytic site termed the peptidyl transferase center (PTC), which catalyzes the formation of peptide bonds, thereby polymerizing the amino acids delivered by tRNAs into a polypeptide chain. The nascent polypeptides leave the ribosome through a tunnel in the LSU and interact with protein factors that function in enzymatic processing, targeting, and the membrane insertion of nascent chains at the exit of the ribosomal tunnel. In Schizosaccharomyces pombe (strain 972 / ATCC 24843) (Fission yeast), this protein is Small ribosomal subunit protein eS12A (rps1201).